Reading from the N-terminus, the 128-residue chain is Large ribosomal subunit protein bL17 (128 aa).

Belongs to the bacterial ribosomal protein bL17 family. As to quaternary structure, part of the 50S ribosomal subunit. Contacts protein L32.

This chain is Large ribosomal subunit protein bL17, found in Streptococcus uberis (strain ATCC BAA-854 / 0140J).